The sequence spans 204 residues: Nascent polypeptide-associated complex subunit alpha (204 aa).

Basic and acidic residues predominate over residues 1 to 19 (MADPRVEELPDEEVPKANV). Disordered stretches follow at residues 1 to 47 (MADP…IHSR) and 118 to 167 (QLAA…GLEA). Residues 22-32 (AGSDSESEAGE) show a composition bias toward acidic residues. Residues 46-111 (SRNEKKARKA…AKIEDLNSQA (66 aa)) enclose the NAC-A/B domain. Positions 118 to 128 (QLAAAEAAAGE) are enriched in low complexity. Residues 129 to 151 (HAGHDHDHDHGKGKAPETEAKKE) show a composition bias toward basic and acidic residues. Positions 152-164 (EEEDDGEEVDETG) are enriched in acidic residues. The 40-residue stretch at 165 to 204 (LEAKDIELVMAQANVSRKKAVKALRENDNDIVNSIMALSI) folds into the UBA domain.

The protein belongs to the NAC-alpha family. As to quaternary structure, part of the nascent polypeptide-associated complex (NAC), consisting of egd2 and egd1. NAC associates with ribosomes via egd1.

It localises to the cytoplasm. The protein resides in the nucleus. In terms of biological role, component of the nascent polypeptide-associated complex (NAC), a dynamic component of the ribosomal exit tunnel, protecting the emerging polypeptides from interaction with other cytoplasmic proteins to ensure appropriate nascent protein targeting. The NAC complex also promotes mitochondrial protein import by enhancing productive ribosome interactions with the outer mitochondrial membrane and blocks the inappropriate interaction of ribosomes translating non-secretory nascent polypeptides with translocation sites in the membrane of the endoplasmic reticulum. Egd2 may also be involved in transcription regulation. The chain is Nascent polypeptide-associated complex subunit alpha (egd2) from Aspergillus fumigatus (strain ATCC MYA-4609 / CBS 101355 / FGSC A1100 / Af293) (Neosartorya fumigata).